Consider the following 722-residue polypeptide: Phenylalanine ammonia-lyase lenB (722 aa).

Y83 (proton donor/acceptor) is an active-site residue. The tract at residues 117–136 is disordered; it reads LPTDRSSSRPSSRYPHGLRS. Positions 190–192 form a cross-link, 5-imidazolinone (Ala-Gly); that stretch reads ASG. S191 carries the 2,3-didehydroalanine (Ser) modification. Residues N247, Q334, R340, N370, K441, E469, and N472 each contribute to the (E)-cinnamate site.

Belongs to the PAL/histidase family. Contains an active site 4-methylidene-imidazol-5-one (MIO), which is formed autocatalytically by cyclization and dehydration of residues Ala-Ser-Gly.

The enzyme catalyses L-phenylalanine = (E)-cinnamate + NH4(+). Its pathway is alkaloid biosynthesis. In terms of biological role, phenylalanine ammonia-lyase; part of the gene cluster that mediates the biosynthesis of the ergot alkaloids lentopeptins A and B. Within the pathway, lenB provides the cinnamic acid starter unit for the synthesis of the N-acyldiketopiperazine intermediate by the NRPS lenA. Cinnamic acid is condensed with the Ala-Val-Ala peptide chain by lenA which leads to the N-acyldiketopiperazine intermediate which in turn is converted into lentopeptins A and B by the cytochrome P450 monooxygenase lenC. In Aspergillus lentulus, this protein is Phenylalanine ammonia-lyase lenB.